A 142-amino-acid polypeptide reads, in one-letter code: Multiprotein-bridging factor 1b (142 aa).

The disordered stretch occupies residues 49–75 (NAGSNKAASSGTSLNTKKLDDDTENLS). Residues 50–64 (AGSNKAASSGTSLNT) are compositionally biased toward polar residues. The span at 65–75 (KKLDDDTENLS) shows a compositional bias: basic and acidic residues. The HTH cro/C1-type domain maps to 87-141 (IMQARGEKKLTQSQLAHLINEKPQVIQEYESGKAIPNQQILSKLERALGAKLRGK). The H-T-H motif DNA-binding region spans 98 to 117 (QSQLAHLINEKPQVIQEYES).

The protein belongs to the MBF1 family. As to expression, expressed in leaves, roots, stems, petioles and shoots. Higher expression in flowers and siliques. Detected in leaf veins through development.

The protein localises to the nucleus. It localises to the nucleolus. In terms of biological role, transcriptional coactivator that stimulates transcriptional activity by bridging regulatory proteins and TBP, thereby recruiting TBP to promoters occupied by DNA-binding regulators. The chain is Multiprotein-bridging factor 1b (MBF1B) from Arabidopsis thaliana (Mouse-ear cress).